Consider the following 644-residue polypeptide: DNA mismatch repair protein MutL (644 aa).

It belongs to the DNA mismatch repair MutL/HexB family.

This protein is involved in the repair of mismatches in DNA. It is required for dam-dependent methyl-directed DNA mismatch repair. May act as a 'molecular matchmaker', a protein that promotes the formation of a stable complex between two or more DNA-binding proteins in an ATP-dependent manner without itself being part of a final effector complex. The chain is DNA mismatch repair protein MutL from Chlorobium chlorochromatii (strain CaD3).